The primary structure comprises 1033 residues: RNA cytidine acetyltransferase (1033 aa).

Residues 285–294 (GRGKSAALGL) and Arg465 contribute to the ATP site. Positions 560 to 694 (VDLKNPKLPD…IHVRDAKTMP (135 aa)) constitute an N-acetyltransferase domain. Residues 626-628 (IAV), 633-639 (VKMGYGT), and Arg727 contribute to the acetyl-CoA site. Residues 988 to 1033 (ENQIQKTNGKGARVVSIKGEKRKNNSLDASDKKTKEKPSSKKKFRK) form a disordered region. The span at 1005-1026 (KGEKRKNNSLDASDKKTKEKPS) shows a compositional bias: basic and acidic residues.

The protein belongs to the RNA cytidine acetyltransferase family. NAT10 subfamily. As to quaternary structure, interacts with tan1.

It localises to the nucleus. The protein resides in the nucleolus. It carries out the reaction a cytidine in 18S rRNA + acetyl-CoA + ATP + H2O = an N(4)-acetylcytidine in 18S rRNA + ADP + phosphate + CoA + H(+). It catalyses the reaction a cytidine in tRNA + acetyl-CoA + ATP + H2O = an N(4)-acetylcytidine in tRNA + ADP + phosphate + CoA + H(+). In terms of biological role, RNA cytidine acetyltransferase with specificity toward both 18S rRNA and tRNAs. Catalyzes the formation of N(4)-acetylcytidine (ac4C) at positions 1297 and 1815 in 18S rRNA. Required for early nucleolar cleavages of precursor rRNA at sites A0, A1 and A2 during 18S rRNA synthesis. Catalyzes the formation of ac4C in serine and leucine tRNAs. Requires the tRNA-binding adapter protein tan1 for full tRNA acetyltransferase activity but not for 18S rRNA acetylation. The chain is RNA cytidine acetyltransferase from Schizosaccharomyces pombe (strain 972 / ATCC 24843) (Fission yeast).